Consider the following 567-residue polypeptide: Phenylalanine ammonia-lyase (567 aa).

Catalysis depends on tyrosine 78, which acts as the Proton donor/acceptor. A cross-link (5-imidazolinone (Ala-Gly)) is located at residues 167-169 (ASG). Position 168 is a 2,3-didehydroalanine (Ser) (serine 168). (E)-cinnamate contacts are provided by asparagine 223, glutamine 311, arginine 317, asparagine 347, lysine 419, glutamate 448, and asparagine 451.

It belongs to the PAL/histidase family. In terms of assembly, homotetramer. Contains an active site 4-methylidene-imidazol-5-one (MIO), which is formed autocatalytically by cyclization and dehydration of residues Ala-Ser-Gly.

The protein resides in the cytoplasm. The catalysed reaction is L-phenylalanine = (E)-cinnamate + NH4(+). Its pathway is phenylpropanoid metabolism; trans-cinnamate biosynthesis; trans-cinnamate from L-phenylalanine: step 1/1. Catalyzes the non-oxidative deamination of L-phenylalanine to form trans-cinnamic acid, the first step in the phenylpropanoid pathway. In Trichormus variabilis (strain ATCC 29413 / PCC 7937) (Anabaena variabilis), this protein is Phenylalanine ammonia-lyase.